Consider the following 450-residue polypeptide: Glucose-6-phosphate isomerase (450 aa).

Glutamate 291 serves as the catalytic Proton donor. Residues histidine 312 and lysine 426 contribute to the active site.

Belongs to the GPI family.

The protein localises to the cytoplasm. The enzyme catalyses alpha-D-glucose 6-phosphate = beta-D-fructose 6-phosphate. The protein operates within carbohydrate biosynthesis; gluconeogenesis. It functions in the pathway carbohydrate degradation; glycolysis; D-glyceraldehyde 3-phosphate and glycerone phosphate from D-glucose: step 2/4. Its function is as follows. Catalyzes the reversible isomerization of glucose-6-phosphate to fructose-6-phosphate. In Clostridium botulinum (strain Hall / ATCC 3502 / NCTC 13319 / Type A), this protein is Glucose-6-phosphate isomerase.